We begin with the raw amino-acid sequence, 993 residues long: UPF0182 protein MAV_4137 (993 aa).

7 helical membrane-spanning segments follow: residues 18-38, 63-83, 113-133, 175-195, 210-230, 254-274, and 287-307; these read ILILIALGVIALLLAGPRLID, FVVFLIAGLLVGGIVFAGLAV, LVSIGVPVAIGLLAGIIAQSY, FVAVFLAFVANLLAHYIFGGI, IQLVTLVGLLVLLKAVAYWLD, AVLPAKLILMAIALICAAAVF, and IGLVLLLLSSLIVGAGWPLIV. The interval 903–941 is disordered; sequence NIQPTEGGAPAASPPANAPAPAVTPGSAPPVAAPPVPDG. A compositionally biased stretch (pro residues) spans 929–939; it reads SAPPVAAPPVP.

This sequence belongs to the UPF0182 family.

It localises to the cell membrane. The protein is UPF0182 protein MAV_4137 of Mycobacterium avium (strain 104).